Here is a 214-residue protein sequence, read N- to C-terminus: Adenylate kinase (214 aa).

10 to 15 contacts ATP; it reads GVGKGT. An NMP region spans residues 30-59; sequence STGDILRAAVKELTPMGAKAKGYMDSGALV. AMP contacts are provided by residues T31, R36, 57-59, 85-88, and Q92; these read ALV and GFPR. The LID stretch occupies residues 126 to 163; that stretch reads GRRACANCGAGYHVDFAPSKVAGVCDACSGQLVQREDD. R127 is a binding site for ATP. Residues C130, C133, C150, and C153 each coordinate Zn(2+). Residues R160 and R171 each contribute to the AMP site. G199 is an ATP binding site.

Belongs to the adenylate kinase family. Monomer.

The protein resides in the cytoplasm. It carries out the reaction AMP + ATP = 2 ADP. It functions in the pathway purine metabolism; AMP biosynthesis via salvage pathway; AMP from ADP: step 1/1. In terms of biological role, catalyzes the reversible transfer of the terminal phosphate group between ATP and AMP. Plays an important role in cellular energy homeostasis and in adenine nucleotide metabolism. This chain is Adenylate kinase, found in Geobacter sp. (strain M21).